The chain runs to 378 residues: DNA replication and repair protein RecF (378 aa).

Gly30–Thr37 contacts ATP.

The protein belongs to the RecF family.

Its subcellular location is the cytoplasm. The RecF protein is involved in DNA metabolism; it is required for DNA replication and normal SOS inducibility. RecF binds preferentially to single-stranded, linear DNA. It also seems to bind ATP. This is DNA replication and repair protein RecF from Frankia alni (strain DSM 45986 / CECT 9034 / ACN14a).